A 278-amino-acid chain; its full sequence is Asnovolin E/Chermesin D methyltransferase nvfJ (278 aa).

Residues 125–126, 152–153, and 153–154 contribute to the S-adenosyl-L-methionine site; these read DL, NI, and IL.

Belongs to the class I-like SAM-binding methyltransferase superfamily. In terms of assembly, homodimer.

It catalyses the reaction chermesin D + S-adenosyl-L-methionine = chermesin D methyl ester + S-adenosyl-L-homocysteine. The catalysed reaction is asnovolin I + S-adenosyl-L-methionine = asnovolin K + S-adenosyl-L-homocysteine. It participates in secondary metabolite biosynthesis; terpenoid biosynthesis. Methyltransferase; part of the gene cluster that mediates the biosynthesis of novofumigatonin, a heavily oxygenated meroterpenoid containing a unique orthoester moiety. The first step of the pathway is the synthesis of 3,5-dimethylorsellinic acid (DMOA) by the polyketide synthase nvfA via condensation of one acetyl-CoA starter unit with 3 malonyl-CoA units and 2 methylations. DMOA is then converted to farnesyl-DMOA by the farnesyltransferase nvfB. Epoxydation by FAD-dependent monooxygenase nvfK, followed by a protonation-initiated cyclization catalyzed by the terpene cyclase nvfL leads to the production of asnavolin H. The short chain dehydrogenase nvfC then as a 3-OH dehydrogenase of asnovolin H to yield chemesin D. There are two branches to synthesize asnovolin A from chemesin D. In one branch, chemesin D undergoes Baeyer-Villiger oxidation by nvfH, methylation by nvfJ, and enoyl reduction by the nvfM D enoylreductase that reduces the double bond between C-5'and C-6', to form respectively asnovolin I, asnovolin K, and asnovolin A. In the other branch, the methylation precedes the Baeyer-Villiger oxidation and the enoyl reduction to yield asnovolin A via the asnovolin J intermediate. Asnovolin A is further converted to fumigatonoid A by the Fe(II)/2-oxoglutarate-dependent dioxygenase nvfI that catalyzes an endoperoxidation reaction. The alpha/beta hydrolase nvfD then acts as an epimerase that converts fumigatonoid A to its C-5' epimer, which then undergoes spontaneous or nvfD-catalyzed lactonization. The following step utilizes the ketoreductase nvfG to produce fumigatonoid B. The dioxygenase nvfE further converts fumigatonoid B into fumigatonoid C. Finally the Fe(II)/2-oxoglutarate-dependent dioxygenase nvfF catalyzes two rounds of oxidation to transform fumigatonoid C into the end product, novofumigatonin A. The polypeptide is Asnovolin E/Chermesin D methyltransferase nvfJ (Aspergillus novofumigatus (strain IBT 16806)).